The chain runs to 320 residues: Quinolinate synthase (320 aa).

Positions 34 and 51 each coordinate iminosuccinate. Cys-96 is a [4Fe-4S] cluster binding site. Iminosuccinate is bound by residues 122–124 and Ser-139; that span reads YIN. Residue Cys-182 participates in [4Fe-4S] cluster binding. Iminosuccinate is bound by residues 208 to 210 and Thr-225; that span reads HPE. Position 276 (Cys-276) interacts with [4Fe-4S] cluster.

It belongs to the quinolinate synthase family. Type 2 subfamily. Requires [4Fe-4S] cluster as cofactor.

Its subcellular location is the cytoplasm. It catalyses the reaction iminosuccinate + dihydroxyacetone phosphate = quinolinate + phosphate + 2 H2O + H(+). The protein operates within cofactor biosynthesis; NAD(+) biosynthesis; quinolinate from iminoaspartate: step 1/1. Functionally, catalyzes the condensation of iminoaspartate with dihydroxyacetone phosphate to form quinolinate. This chain is Quinolinate synthase, found in Synechococcus sp. (strain ATCC 27144 / PCC 6301 / SAUG 1402/1) (Anacystis nidulans).